The sequence spans 547 residues: bZIP transcription factor 29 (547 aa).

Disordered regions lie at residues 1–199 (MGDT…SGGE), 244–312 (NSSE…DIAP), and 333–356 (GDES…TNSV). A compositionally biased stretch (polar residues) spans 15 to 52 (LHSSFGTTSSSIPKNPISQLDLNPNFIRSSAPQFSKPF). Over residues 63–73 (PSHPNLIPPTS) the composition is skewed to pro residues. A compositionally biased stretch (polar residues) spans 74–89 (PFSQIPTTRQPGSHNF). Positions 120–132 (FRDHDVSMEDRDS) are enriched in basic and acidic residues. Residues 134-157 (VFNSNHSLPPSPFTRCNSTSSSSL) show a composition bias toward polar residues. Over residues 249 to 263 (DDSKNGNENRDDMES) the composition is skewed to basic and acidic residues. Polar residues predominate over residues 264-275 (SRASGTKTNGSD). Over residues 279-294 (ESSSVNESANNNMNSS) the composition is skewed to low complexity. The span at 344–356 (GSMSRKVSPTNSV) shows a compositional bias: polar residues. The bZIP domain occupies 394-457 (DPKRVKRILA…MGLTNQNNEL (64 aa)). Residues 396–417 (KRVKRILANRQSAARSKERKMR) are basic motif. A coiled-coil region spans residues 416–469 (MRYIVELEHKVQTLQTEATTLSAQLTLLQRDMMGLTNQNNELKFRLQAMEQQAR). Residues 422-457 (LEHKVQTLQTEATTLSAQLTLLQRDMMGLTNQNNEL) form a leucine-zipper region. Positions 517 to 535 (QLRQQPQQMQQQSHQQNHQ) are enriched in low complexity. Residues 517–547 (QLRQQPQQMQQQSHQQNHQNGTMATKSESNE) are disordered. The segment covering 536-547 (NGTMATKSESNE) has biased composition (polar residues).

Forms homodimers. As to expression, expressed in roots, leaves and flowers. Expressed in the root tips, lateral root primordia, and guard cells of leaves, hypocotyls and anthers.

It is found in the cytoplasm. The protein resides in the nucleus. Its function is as follows. Transcription factor that acts as a repressor of reproductive development, meristem size and plant growth. Regulates meristem size, cell size and cell number during plant development. Binds to the promoters of the cell cycle regulators CYCB1-2 and SMR4, and genes involved in cell wall organization, such as XTH9, EXPA1 and EXPA3. Possesses transactivation activity in yeast. Possesses transactivation activity in plant protoplasts. Plays a role in abiotic stress response by binding to the 5'-CAGCTG-3' DNA sequence found in the promoters of MYB44 and TRX8. Plays a role in osmosensory response by binding to the 5'-AGCTGT/G-3' DNA sequence found in the promoters of the hypoosmolarity-responsive genes CYP707A1 and CYP707A3. Binds to the 5'-AGCTGT-3' DNA sequence found in the promoter of the ZAT1 gene in response to abiotic stresses, such as oxidative stress, high-light, osmotic shock, salt and heat stresses. In Arabidopsis thaliana (Mouse-ear cress), this protein is bZIP transcription factor 29.